Reading from the N-terminus, the 1185-residue chain is Syntaxin-binding protein 5-like (1185 aa).

N-acetylmethionine is present on methionine 1. Residues 15-44 (ASSPGSGSSSGSNSGGAGSGSVHPGGTAGL) are disordered. Positions 16–26 (SSPGSGSSSGS) are enriched in low complexity. WD repeat units follow at residues 73-106 (TALA…CYCQ), 113-152 (VLQL…SLKF), 157-193 (ITYC…GYVI), 212-246 (HLSD…ELRV), 252-284 (IHSI…PSRP), 306-348 (PILK…KAIT), 356-390 (IVEF…VVDL), 412-489 (TCTA…YKLK), 517-628 (QMIY…DLVI), and 642-704 (TSLS…IADN). A Phosphothreonine modification is found at threonine 567. The interval 567-601 (TPEPETSPPFPDLSSQLPPSRSLSGSTNTVSSEGV) is disordered. Residues serine 573, serine 588, and serine 592 each carry the phosphoserine modification. Positions 578-592 (DLSSQLPPSRSLSGS) are enriched in low complexity. Threonine 595 bears the Phosphothreonine mark. At serine 598 the chain carries Phosphoserine. Arginine 708 carries the post-translational modification Omega-N-methylarginine. A compositionally biased stretch (polar residues) spans 747–768 (TSDHVNGHCTSPTSQSCSSGKR). Positions 747-770 (TSDHVNGHCTSPTSQSCSSGKRLS) are disordered. Phosphoserine is present on residues serine 762, serine 764, serine 765, serine 770, serine 771, serine 792, serine 799, serine 811, serine 819, serine 821, and serine 822. 4 WD repeats span residues 831-888 (ITAL…SGTF), 897-968 (TFSC…QTCL), 973-1017 (ITET…LDVN), and 1031-1054 (CFTN…TYSQ). The residue at position 1092 (threonine 1092) is a Phosphothreonine. In terms of domain architecture, v-SNARE coiled-coil homology spans 1120 to 1180 (SIEGMKGAAG…HELMLKYKDK (61 aa)).

Belongs to the WD repeat L(2)GL family. In terms of assembly, interacts with STX1A and STX4. Post-translationally, phosphorylated, leading to STXBP5L increased turnover and subsequent de-repression of insulin secretion. Phosphorylated on serine residues in response to glucose or phorbol esters. In terms of processing, ubiquitinated by the E3 ligase SYVN1, leading to STXBP5L proteasomal degradation. As to expression, detected in hippocampus and cerebellum. Expressed in pancreatic beta-cells where it modulates insulin secretion.

Its subcellular location is the cytoplasm. The protein localises to the cell membrane. The protein resides in the membrane. Functionally, plays a role in vesicle trafficking and exocytosis inhibition. In pancreatic beta-cells, inhibits insulin secretion probably by interacting with and regulating STX1A and STX4, key t-SNARE proteins involved in the fusion of insulin granules to the plasma membrane. Also plays a role in neurotransmitter release by inhibiting basal acetylcholine release from axon terminals and by preventing synaptic fatigue upon repetitive stimulation. Promotes as well axonal outgrowth. This Mus musculus (Mouse) protein is Syntaxin-binding protein 5-like (Stxbp5l).